A 214-amino-acid polypeptide reads, in one-letter code: Probable chemoreceptor glutamine deamidase CheD (214 aa).

This sequence belongs to the CheD family.

The catalysed reaction is L-glutaminyl-[protein] + H2O = L-glutamyl-[protein] + NH4(+). Its function is as follows. Probably deamidates glutamine residues to glutamate on methyl-accepting chemotaxis receptors (MCPs), playing an important role in chemotaxis. The protein is Probable chemoreceptor glutamine deamidase CheD of Vibrio vulnificus (strain CMCP6).